The primary structure comprises 168 residues: Photosystem I assembly protein Ycf3 (168 aa).

3 TPR repeats span residues 35-68 (AFTY…EIDP), 72-105 (SYIL…NPFL), and 120-153 (GEQA…TPGN).

This sequence belongs to the Ycf3 family.

Its subcellular location is the plastid. The protein localises to the chloroplast thylakoid membrane. Essential for the assembly of the photosystem I (PSI) complex. May act as a chaperone-like factor to guide the assembly of the PSI subunits. This is Photosystem I assembly protein Ycf3 from Drimys granadensis.